A 510-amino-acid polypeptide reads, in one-letter code: 2,3-bisphosphoglycerate-independent phosphoglycerate mutase (510 aa).

Mn(2+) is bound by residues Asp-12 and Ser-62. Residue Ser-62 is the Phosphoserine intermediate of the active site. Residues His-123, 153–154, Arg-185, Arg-191, 260–263, and Lys-335 contribute to the substrate site; these read RD and RPDR. 5 residues coordinate Mn(2+): Asp-402, His-406, Asp-443, His-444, and His-461.

This sequence belongs to the BPG-independent phosphoglycerate mutase family. As to quaternary structure, monomer. It depends on Mn(2+) as a cofactor.

It carries out the reaction (2R)-2-phosphoglycerate = (2R)-3-phosphoglycerate. Its pathway is carbohydrate degradation; glycolysis; pyruvate from D-glyceraldehyde 3-phosphate: step 3/5. In terms of biological role, catalyzes the interconversion of 2-phosphoglycerate and 3-phosphoglycerate. This chain is 2,3-bisphosphoglycerate-independent phosphoglycerate mutase, found in Listeria welshimeri serovar 6b (strain ATCC 35897 / DSM 20650 / CCUG 15529 / CIP 8149 / NCTC 11857 / SLCC 5334 / V8).